Here is a 211-residue protein sequence, read N- to C-terminus: Probable septum site-determining protein MinC (211 aa).

Belongs to the MinC family. As to quaternary structure, interacts with MinD and FtsZ.

In terms of biological role, cell division inhibitor that blocks the formation of polar Z ring septums. Rapidly oscillates between the poles of the cell to destabilize FtsZ filaments that have formed before they mature into polar Z rings. Prevents FtsZ polymerization. The sequence is that of Probable septum site-determining protein MinC from Clostridium perfringens (strain 13 / Type A).